The sequence spans 893 residues: Probable ion channel CASTOR (893 aa).

Residues 1–94 (MPLDPDSSPA…APRRRDPRYA (94 aa)) are disordered. The span at 65-85 (PLPPPEQQKQQQPPPTTPPPA) shows a compositional bias: pro residues. A helical transmembrane segment spans residues 132–152 (TLRWSGMVSVAAIVLCFSSLV). Residues 156–178 (SSLHDQVHHLKAQLAEATTKLQS) adopt a coiled-coil conformation. The next 3 helical transmembrane spans lie at 210–230 (LLLS…MDLF), 266–286 (LVLL…LYGV), and 318–338 (LVSV…LGLV). RCK N-terminal domains are found at residues 359–500 (QSHT…ETVV) and 619–792 (PERI…DYVL). Residues 389 to 415 (TIVVMAEKDKEEMEADIAKMEFDLKGT) are a coiled coil.

Belongs to the castor/pollux (TC 1.A.1.23) family. In terms of tissue distribution, expressed in roots, leaves, stems and panicles.

The protein localises to the nucleus membrane. Functionally, required for mycorrhizal symbiosis. This Oryza sativa subsp. japonica (Rice) protein is Probable ion channel CASTOR.